The chain runs to 808 residues: Phospholipase D alpha 1 (808 aa).

Positions 1 to 125 (MAKTLLHGTL…LEGEEVDKWV (125 aa)) constitute a C2 domain. Asp-186 contributes to the Ca(2+) binding site. Residues 326-364 (TIFTHHQKIVVVDSEMPTSGSENRRVVSFVGGIDLCDGR) form the PLD phosphodiesterase 1 domain. Active-site residues include His-331, Lys-333, and Asp-338. Residue His-331 coordinates a 1,2-diacyl-sn-glycero-3-phosphate. 2 residues coordinate Ca(2+): His-370 and His-404. A PLD phosphodiesterase 2 domain is found at 654–681 (FMIYVHAKMMIVDDEYIIIGSANINQRS). Active-site residues include His-659, Lys-661, and Asp-666. An a 1,2-diacyl-sn-glycero-3-phosphate-binding site is contributed by His-659. Glu-720 contacts Ca(2+).

It belongs to the phospholipase D family. C2-PLD subfamily. It depends on Ca(2+) as a cofactor.

The catalysed reaction is a 1,2-diacyl-sn-glycero-3-phosphocholine + H2O = a 1,2-diacyl-sn-glycero-3-phosphate + choline + H(+). Its function is as follows. Hydrolyzes glycerol-phospholipids at the terminal phosphodiesteric bond. Plays an important role in various cellular processes. The polypeptide is Phospholipase D alpha 1 (PLD1) (Spuriopimpinella brachycarpa (Chamnamul)).